A 230-amino-acid polypeptide reads, in one-letter code: uncharacterized protein (230 aa).

Residues 93-115 (VFLYYFLIVYTSGNVDLISRFLF) traverse the membrane as a helical segment.

It belongs to the DUP/COS family.

The protein resides in the membrane. This is an uncharacterized protein from Saccharomyces cerevisiae (strain ATCC 204508 / S288c) (Baker's yeast).